Here is a 345-residue protein sequence, read N- to C-terminus: Heat-inducible transcription repressor HrcA (345 aa).

This sequence belongs to the HrcA family.

Negative regulator of class I heat shock genes (grpE-dnaK-dnaJ and groELS operons). Prevents heat-shock induction of these operons. This is Heat-inducible transcription repressor HrcA from Lachnoclostridium phytofermentans (strain ATCC 700394 / DSM 18823 / ISDg) (Clostridium phytofermentans).